The chain runs to 856 residues: Serine/threonine-protein kinase unc-51 (856 aa).

Residues 9-275 (YSKRDLLGHG…FEDFFNHPFL (267 aa)) enclose the Protein kinase domain. Residues 15–23 (LGHGAFAIV) and K39 each bind ATP. Catalysis depends on D134, which acts as the Proton acceptor. The interval 304-327 (PQSSLPVPKRAGSTKLDSPTPVRR) is disordered. The LIR signature appears at 358 to 361 (FTFL). 3 disordered regions span residues 362-391 (PPRQ…PVPV), 405-471 (LAAA…ERMT), and 520-582 (PTTT…PTEP). The span at 365 to 385 (QESSPVKQVQVHTNVSPSLTT) shows a compositional bias: polar residues. The segment covering 411-436 (TAVPSSSSPTGSAVSAQHQHQHQQQQ) has biased composition (low complexity). Composition is skewed to polar residues over residues 527 to 536 (IPKSATTANI) and 566 to 578 (KYQQ…SPTA). Positions 750–856 (YHQCLVRSQE…RQGFVAAVNT (107 aa)) are required for interaction with unc-14 and vab-8.

This sequence belongs to the protein kinase superfamily. Ser/Thr protein kinase family. APG1/unc-51/ULK1 subfamily. As to quaternary structure, interacts with unc-14 and vab-8. Interacts (via C-terminus) with atg-13. Interacts (via the LIR motif) with lgg-1; the interaction is direct. Mg(2+) serves as cofactor.

The catalysed reaction is L-seryl-[protein] + ATP = O-phospho-L-seryl-[protein] + ADP + H(+). The enzyme catalyses L-threonyl-[protein] + ATP = O-phospho-L-threonyl-[protein] + ADP + H(+). In terms of biological role, protein kinase important for axonal elongation and axonal guidance. Functions in the CAN axons to direct both anterior and posterior migrations. Phosphorylates both unc-14 and vab-8. Component of the unc-51/atg-13 complex that is probably recruited by lgg-1 to preautophagosomes and is required for autophagosome formation. Interaction with autophagy related proteins such as atg-13 links it to the autophagy machinery to in turn promote P-granule degradation in somatic cells. Plays a role in mitophagy during limited food availability. Regulates cell size. Plays a role in male tail ray pattern formation. May be required for normal dauer morphogenesis. The chain is Serine/threonine-protein kinase unc-51 from Caenorhabditis elegans.